The sequence spans 77 residues: Cell division topological specificity factor (77 aa).

It belongs to the MinE family.

Functionally, prevents the cell division inhibition by proteins MinC and MinD at internal division sites while permitting inhibition at polar sites. This ensures cell division at the proper site by restricting the formation of a division septum at the midpoint of the long axis of the cell. In Helicobacter pylori (strain P12), this protein is Cell division topological specificity factor.